Consider the following 1032-residue polypeptide: Protein translocase subunit SecA (1032 aa).

ATP-binding positions include Gln-121, 139–143 (GEGKT), and Asp-570. Residues 945-975 (TAGGSENATEDAPKPAKRGVGGAARRVSNAA) form a disordered region. Residues Cys-994, Cys-996, Cys-1005, and His-1006 each coordinate Zn(2+).

It belongs to the SecA family. Monomer and homodimer. Part of the essential Sec protein translocation apparatus which comprises SecA, SecYEG and auxiliary proteins SecDF. Other proteins may also be involved. It depends on Zn(2+) as a cofactor.

Its subcellular location is the cell membrane. It is found in the cytoplasm. The enzyme catalyses ATP + H2O + cellular proteinSide 1 = ADP + phosphate + cellular proteinSide 2.. Part of the Sec protein translocase complex. Interacts with the SecYEG preprotein conducting channel. Has a central role in coupling the hydrolysis of ATP to the transfer of proteins into and across the cell membrane, serving as an ATP-driven molecular motor driving the stepwise translocation of polypeptide chains across the membrane. This Herpetosiphon aurantiacus (strain ATCC 23779 / DSM 785 / 114-95) protein is Protein translocase subunit SecA.